The chain runs to 299 residues: MTDNTRLRIAMQKSGRLSDDSRELLARCGIKINLHTQRLIAMAENMPIDILRVRDDDIPGLVMDGVVDLGIIGENVLEEELLNRRAQGEDPRYFTLRRLDFGGCRLSLATPVDEAWDGPLSLNGKRIATSYPHLLKRYLDQKGISFKSCLLNGSVEVAPRAGLADAICDLVSTGATLEANGLREVEVIYRSKACLIQRDGEMEESKQQLIDKLMIRIQGVIQARESKYIMMHAPTERLDEVIALLPGAERPTILPLAGDQQRVAMHMVSSETLFWETMEKLKALGASSILVLPIEKMME.

Belongs to the ATP phosphoribosyltransferase family. Long subfamily. Equilibrium between an active dimeric form, an inactive hexameric form and higher aggregates. Interconversion between the various forms is largely reversible and is influenced by the natural substrates and inhibitors of the enzyme. The cofactor is Mg(2+).

The protein resides in the cytoplasm. It carries out the reaction 1-(5-phospho-beta-D-ribosyl)-ATP + diphosphate = 5-phospho-alpha-D-ribose 1-diphosphate + ATP. It functions in the pathway amino-acid biosynthesis; L-histidine biosynthesis; L-histidine from 5-phospho-alpha-D-ribose 1-diphosphate: step 1/9. Feedback inhibited by histidine. Its function is as follows. Catalyzes the condensation of ATP and 5-phosphoribose 1-diphosphate to form N'-(5'-phosphoribosyl)-ATP (PR-ATP). Has a crucial role in the pathway because the rate of histidine biosynthesis seems to be controlled primarily by regulation of HisG enzymatic activity. This chain is ATP phosphoribosyltransferase, found in Escherichia coli O17:K52:H18 (strain UMN026 / ExPEC).